The primary structure comprises 545 residues: Threonine--tRNA ligase catalytic subunit (545 aa).

The catalytic stretch occupies residues 139 to 433 (DHRLIGEKLD…LLEHFKGKLP (295 aa)). Zn(2+) is bound by residues Cys-231, His-282, and His-410.

This sequence belongs to the class-II aminoacyl-tRNA synthetase family. As to quaternary structure, homodimer. Probably interacts with its editing subunit. It depends on Zn(2+) as a cofactor.

The protein localises to the cytoplasm. It catalyses the reaction tRNA(Thr) + L-threonine + ATP = L-threonyl-tRNA(Thr) + AMP + diphosphate + H(+). Catalyzes the attachment of threonine to tRNA(Thr) in a two-step reaction: L-threonine is first activated by ATP to form Thr-AMP and then transferred to the acceptor end of tRNA(Thr). Also activates L-serine and transfers it to tRNA(Thr) but cannot deacylate incorrectly charged amino acid; unlike most archaea the editing function is found in a freestanding protein. This chain is Threonine--tRNA ligase catalytic subunit, found in Saccharolobus islandicus (strain L.S.2.15 / Lassen #1) (Sulfolobus islandicus).